The sequence spans 130 residues: Small ribosomal subunit protein uS11c (130 aa).

It belongs to the universal ribosomal protein uS11 family. Part of the 30S ribosomal subunit.

Its subcellular location is the plastid. The protein resides in the chloroplast. In Marchantia polymorpha (Common liverwort), this protein is Small ribosomal subunit protein uS11c.